Consider the following 274-residue polypeptide: Cytochrome b-c1 complex subunit Rieske, mitochondrial (274 aa).

The Mitochondrial matrix portion of the chain corresponds to 79–103 (SHTDVKVPDFCDYRRPEVLDSTKSS). A helical transmembrane segment spans residues 104–140 (RESSEARKSFSYMVTAVTTVGVAYAAKNAVTQFVSSM). The Mitochondrial intermembrane portion of the chain corresponds to 141 to 274 (SASADVLAMA…FTSDDMVVVG (134 aa)). A Rieske domain is found at 187–272 (EAAVELSQLR…YEFTSDDMVV (86 aa)). Residues C217, H219, C236, H239, and S241 each contribute to the [2Fe-2S] cluster site. A disulfide bond links C222 and C238.

This sequence belongs to the Rieske iron-sulfur protein family. Component of the ubiquinol-cytochrome c oxidoreductase (cytochrome b-c1 complex, complex III, CIII), a multisubunit enzyme composed of 11 subunits. The complex is composed of 3 respiratory subunits cytochrome b, cytochrome c1 and Rieske protein UQCRFS1, 2 core protein subunits UQCRC1/QCR1 and UQCRC2/QCR2, and 6 low-molecular weight protein subunits UQCRH/QCR6, UQCRB/QCR7, UQCRQ/QCR8, UQCR10/QCR9, UQCR11/QCR10 and subunit 9, the cleavage product of Rieske protein UQCRFS1. The complex exists as an obligatory dimer and forms supercomplexes (SCs) in the inner mitochondrial membrane with NADH-ubiquinone oxidoreductase (complex I, CI) and cytochrome c oxidase (complex IV, CIV), resulting in different assemblies (supercomplex SCI(1)III(2)IV(1) and megacomplex MCI(2)III(2)IV(2)). Incorporation of the Rieske protein UQCRFS1 is the penultimate step in complex III assembly. Interacts with TTC19, which is involved in the clearance of UQCRFS1 fragments. As to quaternary structure, component of the ubiquinol-cytochrome c oxidoreductase (cytochrome b-c1 complex, complex III, CIII). Subunit 9 corresponds to the mitochondrial targeting sequence (MTS) of Rieske protein UQCRFS1. It is retained after processing and incorporated inside complex III, where it remains bound to the complex and localizes between the 2 core subunits UQCRC1/QCR1 and UQCRC2/QCR2. It depends on [2Fe-2S] cluster as a cofactor. Post-translationally, proteolytic processing is necessary for the correct insertion of UQCRFS1 in the complex III dimer. Several fragments are generated during UQCRFS1 insertion, most probably due to the endogenous matrix-processing peptidase (MPP) activity of the 2 core protein subunits UQCRC1/QCR1 and UQCRC2/QCR2, which are homologous to the 2 mitochondrial-processing peptidase (MPP) subunits beta-MPP and alpha-MPP respectively. The action of the protease is also necessary for the clearance of the UQCRFS1 fragments.

The protein localises to the mitochondrion inner membrane. It carries out the reaction a quinol + 2 Fe(III)-[cytochrome c](out) = a quinone + 2 Fe(II)-[cytochrome c](out) + 2 H(+)(out). Component of the ubiquinol-cytochrome c oxidoreductase, a multisubunit transmembrane complex that is part of the mitochondrial electron transport chain which drives oxidative phosphorylation. The respiratory chain contains 3 multisubunit complexes succinate dehydrogenase (complex II, CII), ubiquinol-cytochrome c oxidoreductase (cytochrome b-c1 complex, complex III, CIII) and cytochrome c oxidase (complex IV, CIV), that cooperate to transfer electrons derived from NADH and succinate to molecular oxygen, creating an electrochemical gradient over the inner membrane that drives transmembrane transport and the ATP synthase. The cytochrome b-c1 complex catalyzes electron transfer from ubiquinol to cytochrome c, linking this redox reaction to translocation of protons across the mitochondrial inner membrane, with protons being carried across the membrane as hydrogens on the quinol. In the process called Q cycle, 2 protons are consumed from the matrix, 4 protons are released into the intermembrane space and 2 electrons are passed to cytochrome c. The Rieske protein is a catalytic core subunit containing a [2Fe-2S] iron-sulfur cluster. It cycles between 2 conformational states during catalysis to transfer electrons from the quinol bound in the Q(0) site in cytochrome b to cytochrome c1. Incorporation of UQCRFS1 is the penultimate step in complex III assembly. Its function is as follows. Component of the ubiquinol-cytochrome c oxidoreductase (cytochrome b-c1 complex, complex III, CIII). UQCRFS1 undergoes proteolytic processing once it is incorporated in the complex III dimer. One of the fragments, called subunit 9, corresponds to its mitochondrial targeting sequence (MTS). The proteolytic processing is necessary for the correct insertion of UQCRFS1 in the complex III dimer, but the persistence of UQCRFS1-derived fragments may prevent newly imported UQCRFS1 to be processed and assembled into complex III and is detrimental for the complex III structure and function. The sequence is that of Cytochrome b-c1 complex subunit Rieske, mitochondrial (UQCRFS1) from Colobus polykomos (Western black-and-white colobus monkey).